The chain runs to 370 residues: DNA replication and repair protein RecF (370 aa).

30 to 37 provides a ligand contact to ATP; that stretch reads GDNGSGKT.

The protein belongs to the RecF family.

The protein localises to the cytoplasm. Functionally, the RecF protein is involved in DNA metabolism; it is required for DNA replication and normal SOS inducibility. RecF binds preferentially to single-stranded, linear DNA. It also seems to bind ATP. This Stutzerimonas stutzeri (strain A1501) (Pseudomonas stutzeri) protein is DNA replication and repair protein RecF.